Here is a 561-residue protein sequence, read N- to C-terminus: Putative transport protein DNO_0009 (561 aa).

5 helical membrane passes run valine 4–isoleucine 24, valine 29–leucine 49, phenylalanine 74–serine 94, alanine 104–phenylalanine 124, and methionine 166–isoleucine 186. RCK C-terminal domains follow at residues leucine 198–glutamate 283 and alanine 285–asparagine 369. The next 6 helical transmembrane spans lie at methionine 379 to leucine 399, alanine 411 to phenylalanine 433, isoleucine 447 to leucine 467, phenylalanine 472 to isoleucine 492, tyrosine 501 to alanine 521, and valine 538 to tryptophan 558.

Belongs to the AAE transporter (TC 2.A.81) family. YidE subfamily.

The protein resides in the cell membrane. In Dichelobacter nodosus (strain VCS1703A), this protein is Putative transport protein DNO_0009.